Here is a 159-residue protein sequence, read N- to C-terminus: Nucleotide-binding protein Pmen_0939 (159 aa).

The protein belongs to the YajQ family.

Functionally, nucleotide-binding protein. This is Nucleotide-binding protein Pmen_0939 from Ectopseudomonas mendocina (strain ymp) (Pseudomonas mendocina).